A 325-amino-acid polypeptide reads, in one-letter code: MEEERDHNASESSLPSLSKQLESSTLGGSAVDVPVVDLSVSDEDFLVREVVKASEEWGVFQVVNHGIPTELMRQLQMVGTQFFELPDAEKETVAKEEDFEGYKKNYLGGINNWDEHLFHRLSPPSIINYKYWPKNPPQYREVTEEYTKHMKRLTEKILGWLSEGLGLQRETFTQSIGGDTAEYVLRVNFYPPTQDTELVIGAAAHSDMGAIALLIPNEVPGLQAFKDEQWLDLDYIDSAVVVIIGDQLMRMTNGRLKNVLHRAKSDKDKLRISWPVFVAPRADMSVGPLPEFTGDENPPKFETLIYNDYIDQKIRGWALEDLPVY.

Residues 1–21 form a disordered region; that stretch reads MEEERDHNASESSLPSLSKQL. A compositionally biased stretch (polar residues) spans 10–21; it reads SESSLPSLSKQL. Residues 180 to 280 enclose the Fe2OG dioxygenase domain; it reads TAEYVLRVNF…RISWPVFVAP (101 aa). 188–190 is a 2-oxoglutarate binding site; the sequence is NFY. The Fe cation site is built by His-205, Asp-207, and His-261. 271–273 is a 2-oxoglutarate binding site; it reads RIS.

This sequence belongs to the iron/ascorbate-dependent oxidoreductase family. Requires Fe(2+) as cofactor. As to expression, expressed in young seedlings.

It catalyses the reaction a (2R,3R)-dihydroflavonol + 2-oxoglutarate + O2 = a flavonol + succinate + CO2 + H2O. It participates in secondary metabolite biosynthesis; flavonoid biosynthesis. This is Probable flavonol synthase 5 (FLS5) from Arabidopsis thaliana (Mouse-ear cress).